The following is an 807-amino-acid chain: Histone transcription regulator slm9 (807 aa).

2 WD repeats span residues 62–100 (SFDSPISCIRFTYDGSCLAVATEAGTFLYHSEKWDKAFQ) and 102–140 (LSGPAYEVCWSQQGHILATSWKQISIYVKDEGLRTETIV). Residues 144 to 164 (EHADSNHQPAVSIEESKEAVE) are disordered. WD repeat units follow at residues 182 to 221 (GHHTFVGGLAFDPMGQFLASQSFDHTLKVWKLSTFGVEKS), 230 to 273 (PTGN…YDIN), 276 to 322 (GHQG…PMAV), and 326 to 367 (LSCS…EKMD). The disordered stretch occupies residues 388-437 (NKNAAADRTTSPTQGQPESPSKSILLRPPPSIASSPESKRRKCPKKFVAR). Positions 395–409 (RTTSPTQGQPESPSK) are enriched in polar residues. Phosphoserine is present on residues serine 406, serine 421, and serine 422. The span at 426-435 (KRRKCPKKFV) shows a compositional bias: basic residues. WD repeat units lie at residues 492–526 (DCSWFSYLPNAIVLANGTSVFWAVATEDSSIYIYS) and 528–574 (AGRL…AIHS).

Belongs to the WD repeat HIR1 family. As to quaternary structure, interacts with hip1 and hip3.

The protein resides in the cytoplasm. It is found in the nucleus. Probably required for replication-independent chromatin assembly. Required for transcriptional silencing in the outer repeat (otr) centromeric repeats and the Tf2 long terminal repeat retrotransposons. May play an indirect role in the regulation of cdc2 and/or wee1 at the G2/M stage of mitosis. The protein is Histone transcription regulator slm9 (slm9) of Schizosaccharomyces pombe (strain 972 / ATCC 24843) (Fission yeast).